The sequence spans 587 residues: Glutathione hydrolase proenzyme (587 aa).

The first 28 residues, 1–28 (MKRTWNVCLTALLSVLLVAGSVPFHAEA), serve as a signal peptide directing secretion. Residues 29–35 (KKPPKSY) constitute a propeptide that is removed on maturation. Arginine 113 provides a ligand contact to L-glutamate. The Nucleophile role is filled by threonine 403. L-glutamate is bound by residues threonine 421, glutamate 423, glutamate 442, aspartate 445, 464 to 465 (SS), and 485 to 486 (GG).

Belongs to the gamma-glutamyltransferase family. This enzyme consists of two polypeptide chains, which are synthesized in precursor form from a single polypeptide. Cleaved by autocatalysis into a large and small subunit.

The protein resides in the secreted. The catalysed reaction is an N-terminal (5-L-glutamyl)-[peptide] + an alpha-amino acid = 5-L-glutamyl amino acid + an N-terminal L-alpha-aminoacyl-[peptide]. It catalyses the reaction glutathione + H2O = L-cysteinylglycine + L-glutamate. It carries out the reaction an S-substituted glutathione + H2O = an S-substituted L-cysteinylglycine + L-glutamate. Its pathway is sulfur metabolism; glutathione metabolism. With respect to regulation, inhibited by glucose. In terms of biological role, cleaves the gamma-glutamyl bond of extracellular glutathione (gamma-Glu-Cys-Gly), glutathione conjugates, and other gamma-glutamyl compounds. The metabolism of glutathione releases free glutamate and the dipeptide cysteinyl-glycine, which is hydrolyzed to cysteine and glycine by dipeptidases. Uses glutamine as a gamma-glutamyl donor and acceptor for gamma-polyglutamic acid synthesis. Dipeptides are better gamma-glutamyl acceptors than free amino acids. The polypeptide is Glutathione hydrolase proenzyme (ggt) (Bacillus subtilis subsp. natto).